The sequence spans 337 residues: Ribosomal RNA small subunit methyltransferase C (337 aa).

Belongs to the methyltransferase superfamily. RsmC family. Monomer.

The protein localises to the cytoplasm. It carries out the reaction guanosine(1207) in 16S rRNA + S-adenosyl-L-methionine = N(2)-methylguanosine(1207) in 16S rRNA + S-adenosyl-L-homocysteine + H(+). Its function is as follows. Specifically methylates the guanine in position 1207 of 16S rRNA in the 30S particle. This is Ribosomal RNA small subunit methyltransferase C from Acinetobacter baumannii (strain AB307-0294).